Reading from the N-terminus, the 70-residue chain is MFTLKKSLLLLFFLGTINLSLCEEERNAEEERRDEPDEMNVEVEKRFLPLIAGLAANFLPKIFCAITKKC.

An N-terminal signal peptide occupies residues 1 to 22 (MFTLKKSLLLLFFLGTINLSLC). Positions 23 to 44 (EEERNAEEERRDEPDEMNVEVE) are excised as a propeptide. Cys64 and Cys70 are oxidised to a cystine.

In terms of tissue distribution, expressed by the skin glands.

The protein resides in the secreted. Antimicrobial peptide. This Odorrana versabilis (Chinese bamboo leaf odorous frog) protein is Brevinin-1Vb.